The sequence spans 309 residues: Chronophin (309 aa).

Asp-25 (nucleophile) is an active-site residue. Mg(2+)-binding residues include Asp-25 and Asp-27. Asp-27 serves as the catalytic Proton donor. Residues 58-60 (SNN), His-178, and Lys-209 each bind substrate. Asp-234 serves as a coordination point for Mg(2+).

It belongs to the HAD-like hydrolase superfamily. As to quaternary structure, homodimer. It depends on Mg(2+) as a cofactor.

The protein resides in the cytoplasm. It localises to the cytosol. It is found in the cytoskeleton. The protein localises to the cell projection. Its subcellular location is the ruffle membrane. The protein resides in the lamellipodium membrane. It localises to the cell membrane. The catalysed reaction is pyridoxal 5'-phosphate + H2O = pyridoxal + phosphate. It carries out the reaction pyridoxine 5'-phosphate + H2O = pyridoxine + phosphate. The enzyme catalyses pyridoxamine + phosphate = pyridoxamine 5'-phosphate + H2O. It catalyses the reaction O-phospho-L-seryl-[protein] + H2O = L-seryl-[protein] + phosphate. In terms of biological role, functions as a pyridoxal phosphate (PLP) phosphatase, which also catalyzes the dephosphorylation of pyridoxine 5'-phosphate (PNP) and pyridoxamine 5'-phosphate (PMP), with order of substrate preference PLP &gt; PNP &gt; PMP and therefore plays a role in vitamin B6 metabolism. Also functions as a protein serine phosphatase that specifically dephosphorylates 'Ser-3' in proteins of the actin-depolymerizing factor (ADF)/cofilin family like CFL1 and DSTN. Thereby, regulates cofilin-dependent actin cytoskeleton reorganization, being required for normal progress through mitosis and normal cytokinesis. Does not dephosphorylate phosphothreonines in LIMK1. Does not dephosphorylate peptides containing phosphotyrosine. This Rattus norvegicus (Rat) protein is Chronophin.